Consider the following 210-residue polypeptide: uncharacterized protein (210 aa).

Residues Ser18, Ser39, Ser41, Ser57, and Ser60 each carry the phosphoserine modification. A compositionally biased stretch (polar residues) spans 33–46 (LDLDQRSMSPSNIA). A disordered region spans residues 33–58 (LDLDQRSMSPSNIASGEDRITRTNSG). Disordered stretches follow at residues 100–139 (YDHNNGTKSPTPKTSNMVDPKNKKKNKKKKNDKDDKYKVS) and 177–210 (DSAPLDNANYPLSDHSPSLNSMDNTTKHSSNVHT). The segment covering 102-116 (HNNGTKSPTPKTSNM) has biased composition (polar residues). A compositionally biased stretch (basic and acidic residues) spans 130–139 (NDKDDKYKVS). Phosphoserine is present on residues Ser178, Ser189, and Ser192. Residues 191–210 (HSPSLNSMDNTTKHSSNVHT) are compositionally biased toward polar residues.

This is an uncharacterized protein from Saccharomyces cerevisiae (strain ATCC 204508 / S288c) (Baker's yeast).